The following is a 67-amino-acid chain: Large ribosomal subunit protein uL29 (67 aa).

It belongs to the universal ribosomal protein uL29 family.

The polypeptide is Large ribosomal subunit protein uL29 (Sulfurihydrogenibium sp. (strain YO3AOP1)).